The chain runs to 283 residues: Formamidopyrimidine-DNA glycosylase (283 aa).

The active-site Schiff-base intermediate with DNA is Pro-2. Glu-3 serves as the catalytic Proton donor. Lys-60 serves as the catalytic Proton donor; for beta-elimination activity. The DNA site is built by His-95, Arg-114, and Arg-159. An FPG-type zinc finger spans residues 244-278 (WVYGRHNQPCRVCGTPIERIKLGGRSSHFCPQCQP). Arg-268 (proton donor; for delta-elimination activity) is an active-site residue.

This sequence belongs to the FPG family. Monomer. It depends on Zn(2+) as a cofactor.

It catalyses the reaction Hydrolysis of DNA containing ring-opened 7-methylguanine residues, releasing 2,6-diamino-4-hydroxy-5-(N-methyl)formamidopyrimidine.. The enzyme catalyses 2'-deoxyribonucleotide-(2'-deoxyribose 5'-phosphate)-2'-deoxyribonucleotide-DNA = a 3'-end 2'-deoxyribonucleotide-(2,3-dehydro-2,3-deoxyribose 5'-phosphate)-DNA + a 5'-end 5'-phospho-2'-deoxyribonucleoside-DNA + H(+). In terms of biological role, involved in base excision repair of DNA damaged by oxidation or by mutagenic agents. Acts as a DNA glycosylase that recognizes and removes damaged bases. Has a preference for oxidized purines, such as 7,8-dihydro-8-oxoguanine (8-oxoG). Has AP (apurinic/apyrimidinic) lyase activity and introduces nicks in the DNA strand. Cleaves the DNA backbone by beta-delta elimination to generate a single-strand break at the site of the removed base with both 3'- and 5'-phosphates. This Crocosphaera subtropica (strain ATCC 51142 / BH68) (Cyanothece sp. (strain ATCC 51142)) protein is Formamidopyrimidine-DNA glycosylase.